The sequence spans 69 residues: Small ribosomal subunit protein bS21 (69 aa).

Positions 49–69 (IESAKRKAEKKKRLFSKKDKA) are disordered.

The protein belongs to the bacterial ribosomal protein bS21 family.

This chain is Small ribosomal subunit protein bS21, found in Leptospira borgpetersenii serovar Hardjo-bovis (strain JB197).